The primary structure comprises 385 residues: Chaperone protein DnaJ (385 aa).

The J domain maps to 5–70 (DYYEILEITR…SKRQIYDKYG (66 aa)). The segment at 136-213 (GCKKEIHNSF…CKGSGFEISE (78 aa)) adopts a CR-type zinc-finger fold. C149, C152, C165, C168, C187, C190, C201, and C204 together coordinate Zn(2+). 4 CXXCXGXG motif repeats span residues 149-156 (CSDCKGTG), 165-172 (CKDCGGKG), 187-194 (CPTCKGEG), and 201-208 (CSKCKGSG).

It belongs to the DnaJ family. Homodimer. The cofactor is Zn(2+).

The protein resides in the cytoplasm. Participates actively in the response to hyperosmotic and heat shock by preventing the aggregation of stress-denatured proteins and by disaggregating proteins, also in an autonomous, DnaK-independent fashion. Unfolded proteins bind initially to DnaJ; upon interaction with the DnaJ-bound protein, DnaK hydrolyzes its bound ATP, resulting in the formation of a stable complex. GrpE releases ADP from DnaK; ATP binding to DnaK triggers the release of the substrate protein, thus completing the reaction cycle. Several rounds of ATP-dependent interactions between DnaJ, DnaK and GrpE are required for fully efficient folding. Also involved, together with DnaK and GrpE, in the DNA replication of plasmids through activation of initiation proteins. The polypeptide is Chaperone protein DnaJ (Helicobacter hepaticus (strain ATCC 51449 / 3B1)).